A 119-amino-acid chain; its full sequence is Ig heavy chain V region T601 (119 aa).

In terms of domain architecture, Ig-like spans 1 to 112 (EVKLLESGGG…GYFDVWGAGT (112 aa)).

The polypeptide is Ig heavy chain V region T601 (Mus musculus (Mouse)).